The primary structure comprises 904 residues: MQTHEIRKRFLDHFVKAGHTEVPSASVILDDPNLLFVNAGMVQFVPFFLGQRTPPYPTATSIQKCIRTPDIDEVGITTRHNTFFQMAGNFSFGDYFKRGAIELAWALLTNSLAAGGYGLDPERIWTTVYFDDDEAVRLWQEVAGLPAERIQRRGMADNYWSMGIPGPCGPSSEIYYDRGPEFGPAGGPIVSEDRYLEVWNLVFMQNERGEGTTKEDYQILGPLPRKNIDTGMGVERIALVLQDVHNVYETDLLRPVIDTVARVAARAYDVGNHEDDVRYRIIADHSRTAAILIGDGVSPGNDGRGYVLRRLLRRVIRSAKLLGIDAAIVGDLMATVRNAMGPSYPELVADFERISRIAVAEETAFNRTLASGSRLFEEVASSTKKSGATVLSGSDAFTLHDTYGFPIELTLEMAAETGLQVDEIGFRELMAEQRRRAKADAAARKHAHADLSAYRELVDAGATEFTGFDELRSQARILGIFVDGKRVPVVAHGVAGGAGEGQRVELVLDRTPLYAESGGQIADEGTISGTGSSEAARAAVTDVQKIAKTLWVHRVNVESGEFVEGDTVIAAVDPGWRRGATQGHSGTHMVHAALRQVLGPNAVQAGSLNRPGYLRFDFNWQGPLTDDQRTQVEEVTNEAVQADFEVRTFTEQLDKAKAMGAIALFGESYPDEVRVVEMGGPFSLELCGGTHVSNTAQIGPVTILGESSIGSGVRRVEAYVGLDSFRHLAKERALMAGLASSLKVPSEEVPARVANLVERLRAAEKELERVRMASARAAATNAAAGAQRIGNVRLVAQRMSGGMTAADLRSLIGDIRGKLGSEPAVVALIAEGESQTVPYAVAANPAAQDLGIRANDLVKQLAVAVEGRGGGKADLAQGSGKNPTGIDAALDAVRSEIAVIARVG.

Zn(2+) is bound by residues histidine 584, histidine 588, cysteine 687, and histidine 691.

This sequence belongs to the class-II aminoacyl-tRNA synthetase family. The cofactor is Zn(2+).

The protein resides in the cytoplasm. The enzyme catalyses tRNA(Ala) + L-alanine + ATP = L-alanyl-tRNA(Ala) + AMP + diphosphate. Functionally, catalyzes the attachment of alanine to tRNA(Ala) in a two-step reaction: alanine is first activated by ATP to form Ala-AMP and then transferred to the acceptor end of tRNA(Ala). Also edits incorrectly charged Ser-tRNA(Ala) and Gly-tRNA(Ala) via its editing domain. The protein is Alanine--tRNA ligase of Mycobacterium tuberculosis (strain ATCC 25177 / H37Ra).